The primary structure comprises 216 residues: UPF0502 protein PFL_4004 (216 aa).

It belongs to the UPF0502 family.

The protein is UPF0502 protein PFL_4004 of Pseudomonas fluorescens (strain ATCC BAA-477 / NRRL B-23932 / Pf-5).